Reading from the N-terminus, the 533-residue chain is Glucose-6-phosphate isomerase (533 aa).

The active-site Proton donor is the E330. Active-site residues include H359 and K461.

Belongs to the GPI family.

The protein resides in the cytoplasm. It carries out the reaction alpha-D-glucose 6-phosphate = beta-D-fructose 6-phosphate. It participates in carbohydrate biosynthesis; gluconeogenesis. It functions in the pathway carbohydrate degradation; glycolysis; D-glyceraldehyde 3-phosphate and glycerone phosphate from D-glucose: step 2/4. Its function is as follows. Catalyzes the reversible isomerization of glucose-6-phosphate to fructose-6-phosphate. This chain is Glucose-6-phosphate isomerase, found in Prochlorococcus marinus (strain SARG / CCMP1375 / SS120).